A 95-amino-acid polypeptide reads, in one-letter code: MSIKPLHDRVVVKPIEADEISAGGIVIPDSAKEKSTKGEVVAVGPGKPLDNGNVRAPSLKVGDKVIYGQYAGSSYKSEGVEYKVLREDDVLAVIG.

Belongs to the GroES chaperonin family. In terms of assembly, heptamer of 7 subunits arranged in a ring. Interacts with the chaperonin GroEL.

It is found in the cytoplasm. Functionally, together with the chaperonin GroEL, plays an essential role in assisting protein folding. The GroEL-GroES system forms a nano-cage that allows encapsulation of the non-native substrate proteins and provides a physical environment optimized to promote and accelerate protein folding. GroES binds to the apical surface of the GroEL ring, thereby capping the opening of the GroEL channel. This is Co-chaperonin GroES from Stenotrophomonas maltophilia (strain K279a).